The chain runs to 349 residues: ATPase GET3 (349 aa).

26–33 (KGGVGKTT) is an ATP binding site. Asp57 is a catalytic residue. ATP-binding residues include Glu243 and Asn270. Residues Cys280 and Cys283 each coordinate Zn(2+).

It belongs to the arsA ATPase family. As to quaternary structure, homodimer. Component of the Golgi to ER traffic (GET) complex, which is composed of GET1, GET2 and GET3. Within the complex, GET1 and GET2 form a heterotetramer which is stabilized by phosphatidylinositol binding and which binds to the GET3 homodimer. Interacts with the chloride channel protein GEF1.

The protein localises to the cytoplasm. The protein resides in the endoplasmic reticulum. Its subcellular location is the golgi apparatus. In terms of biological role, ATPase required for the post-translational delivery of tail-anchored (TA) proteins to the endoplasmic reticulum. Recognizes and selectively binds the transmembrane domain of TA proteins in the cytosol. This complex then targets to the endoplasmic reticulum by membrane-bound receptors GET1 and GET2, where the tail-anchored protein is released for insertion. This process is regulated by ATP binding and hydrolysis. ATP binding drives the homodimer towards the closed dimer state, facilitating recognition of newly synthesized TA membrane proteins. ATP hydrolysis is required for insertion. Subsequently, the homodimer reverts towards the open dimer state, lowering its affinity for the GET1-GET2 receptor, and returning it to the cytosol to initiate a new round of targeting. Cooperates with the HDEL receptor ERD2 to mediate the ATP-dependent retrieval of resident ER proteins that contain a C-terminal H-D-E-L retention signal from the Golgi to the ER. Involved in low-level resistance to the oxyanions arsenite and arsenate, and in heat tolerance. This Clavispora lusitaniae (strain ATCC 42720) (Yeast) protein is ATPase GET3.